A 429-amino-acid polypeptide reads, in one-letter code: Adenylosuccinate synthetase (429 aa).

GTP is bound by residues 13-19 and 41-43; these read GDEGKGK and GHT. Residue Asp-14 is the Proton acceptor of the active site. Mg(2+) contacts are provided by Asp-14 and Gly-41. IMP is bound by residues 14-17, 39-42, Thr-130, Arg-144, Gln-224, Thr-239, and Arg-303; these read DEGK and NAGH. His-42 serves as the catalytic Proton donor. Residue 299-305 participates in substrate binding; it reads ATTGRAR. GTP-binding positions include Arg-305, 331 to 333, and 412 to 414; these read KLD and STG.

The protein belongs to the adenylosuccinate synthetase family. In terms of assembly, homodimer. Mg(2+) serves as cofactor.

The protein localises to the cytoplasm. The enzyme catalyses IMP + L-aspartate + GTP = N(6)-(1,2-dicarboxyethyl)-AMP + GDP + phosphate + 2 H(+). It participates in purine metabolism; AMP biosynthesis via de novo pathway; AMP from IMP: step 1/2. In terms of biological role, plays an important role in the de novo pathway of purine nucleotide biosynthesis. Catalyzes the first committed step in the biosynthesis of AMP from IMP. The sequence is that of Adenylosuccinate synthetase from Psychrobacter arcticus (strain DSM 17307 / VKM B-2377 / 273-4).